We begin with the raw amino-acid sequence, 462 residues long: GTPase Der (462 aa).

EngA-type G domains follow at residues 3–166 (PVIA…ITEM) and 175–348 (IKIA…HSAI). Residues 9 to 16 (GRPNVGKS), 56 to 60 (DTGGI), 118 to 121 (NKTD), 181 to 188 (GRPNVGKS), 228 to 232 (DTAGV), and 293 to 296 (NKWD) contribute to the GTP site. The 85-residue stretch at 349–433 (QSFSTPKLTR…PLKIEFKGGQ (85 aa)) folds into the KH-like domain.

It belongs to the TRAFAC class TrmE-Era-EngA-EngB-Septin-like GTPase superfamily. EngA (Der) GTPase family. As to quaternary structure, associates with the 50S ribosomal subunit.

Functionally, GTPase that plays an essential role in the late steps of ribosome biogenesis. The chain is GTPase Der from Legionella pneumophila (strain Lens).